Consider the following 80-residue polypeptide: Small, acid-soluble spore protein Tlp (80 aa).

Residues 34–73 are compositionally biased toward basic and acidic residues; sequence AKESMEFATDEEKQRIQEKNARRNESIESFRSEIQDESAA. The tract at residues 34–80 is disordered; the sequence is AKESMEFATDEEKQRIQEKNARRNESIESFRSEIQDESAARENGYQS.

This sequence belongs to the Tlp family.

The protein resides in the spore core. The chain is Small, acid-soluble spore protein Tlp from Bacillus velezensis (strain DSM 23117 / BGSC 10A6 / LMG 26770 / FZB42) (Bacillus amyloliquefaciens subsp. plantarum).